The following is a 218-amino-acid chain: ADP-sugar pyrophosphatase (218 aa).

N-acetylmethionine is present on methionine 1. Serine 10 carries the post-translational modification Phosphoserine. Tryptophan 27 provides a ligand contact to substrate. Lysine 41 is covalently cross-linked (Glycyl lysine isopeptide (Lys-Gly) (interchain with G-Cter in SUMO2)). At threonine 44 the chain carries Phosphothreonine. Residues 45–46 (WE) and arginine 83 each bind substrate. Residues 56-196 (KSADAVSVIP…EQHLTVDAKV (141 aa)) enclose the Nudix hydrolase domain. Alanine 95 provides a ligand contact to Mg(2+). Residues 96 to 117 (GFIEDGESPEAAALRELEEETG) carry the Nudix box motif. Phenylalanine 97 contacts substrate. The Mg(2+) site is built by glutamate 111 and glutamate 115. Aspartate 132 is a substrate binding site. Glutamate 165 is a Mg(2+) binding site. Lysine 209 and lysine 217 each carry N6-acetyllysine.

It belongs to the Nudix hydrolase family. Homodimer. Interacts with PARG. The cofactor is Mg(2+). Post-translationally, phosphorylation at Thr-44 is required for homodimer stability; dephosphorylation results in destabilization of the homodimer. Dephosphorylation at Thr-44 promotes the ATP-synthesis activity. In terms of tissue distribution, widely expressed. Most abundant in liver.

The protein resides in the nucleus. The catalysed reaction is D-ribose 5-phosphate + ATP + H(+) = ADP-D-ribose + diphosphate. The enzyme catalyses ADP-D-ribose + H2O = D-ribose 5-phosphate + AMP + 2 H(+). It catalyses the reaction 8-oxo-dGDP + H2O = 8-oxo-dGMP + phosphate + H(+). Functionally, enzyme that can either act as an ADP-sugar pyrophosphatase in absence of diphosphate or catalyze the synthesis of ATP in presence of diphosphate. In absence of diphosphate, hydrolyzes with similar activities various modified nucleoside diphosphates such as ADP-ribose, ADP-mannose, ADP-glucose, 8-oxo-GDP and 8-oxo-dGDP. Can also hydrolyze other nucleotide sugars with low activity. In presence of diphosphate, mediates the synthesis of ATP in the nucleus by catalyzing the conversion of ADP-ribose to ATP and ribose 5-phosphate. Nuclear ATP synthesis takes place when dephosphorylated at Thr-44. Nuclear ATP generation is required for extensive chromatin remodeling events that are energy-consuming. Does not play a role in U8 snoRNA decapping activity. Binds U8 snoRNA. The protein is ADP-sugar pyrophosphatase of Mus musculus (Mouse).